The primary structure comprises 333 residues: Ornithine carbamoyltransferase (333 aa).

Carbamoyl phosphate-binding positions include 57 to 60 (STRT), Q83, R107, and 134 to 137 (HPTQ). L-ornithine is bound by residues N168, D232, and 236–237 (SM). Carbamoyl phosphate is bound by residues 274 to 275 (CL) and R319.

The protein belongs to the aspartate/ornithine carbamoyltransferase superfamily. OTCase family.

The protein localises to the cytoplasm. It carries out the reaction carbamoyl phosphate + L-ornithine = L-citrulline + phosphate + H(+). Its pathway is amino-acid biosynthesis; L-arginine biosynthesis; L-arginine from L-ornithine and carbamoyl phosphate: step 1/3. Functionally, reversibly catalyzes the transfer of the carbamoyl group from carbamoyl phosphate (CP) to the N(epsilon) atom of ornithine (ORN) to produce L-citrulline. The chain is Ornithine carbamoyltransferase from Photobacterium profundum (strain SS9).